The chain runs to 226 residues: Respiratory nitrate reductase 2 gamma chain (226 aa).

The Periplasmic segment spans residues 1-4 (MIQY). A helical membrane pass occupies residues 5–30 (LNVFFYDIYPYICATVFFLGSWLRYD). The Cytoplasmic portion of the chain corresponds to 31–48 (YGQYTWRASSSQMLDKRG). A helical membrane pass occupies residues 49 to 71 (MVIWSNLFHIGILGIFFGHLFGM). The heme b site is built by histidine 57 and histidine 67. The Periplasmic portion of the chain corresponds to 72 to 83 (LTPHWMYAWFLP). A helical membrane pass occupies residues 84-113 (VAAKQLMAMVLGGICGVLTLIGGAGLLWRR). The Cytoplasmic segment spans residues 114–125 (LTNQRVRATSTT). The chain crosses the membrane as a helical span at residues 126 to 149 (PDIIIMSILLIQCLLGLSTIPFSA). At 150 to 183 (QYPDGSEMMKLVGWAQSIVTFRGGSSEMLNGVAF) the chain is on the periplasmic side. Residues 184-199 (VFRLHLVLGMTIFLLF) traverse the membrane as a helical segment. Heme b contacts are provided by histidine 188 and histidine 206. Residues 200–226 (PFTRLVHVWSAPFEYFTRRYQIVRSRR) are Cytoplasmic-facing.

In terms of assembly, dimer of heterotrimers each composed of an alpha, a beta and a gamma chain. Alpha and beta are catalytic chains; gamma chains are involved in binding the enzyme complex to the cytoplasmic membrane. Requires heme as cofactor.

It is found in the cell inner membrane. The enzyme catalyses nitrate + a quinol = a quinone + nitrite + H2O. This is a second nitrate reductase enzyme which can substitute for the NRA enzyme and allows E.coli to use nitrate as an electron acceptor during anaerobic growth. The gamma chain is a membrane-embedded heme-iron unit resembling cytochrome b, which transfers electrons from quinones to the beta subunit. In Escherichia coli (strain K12), this protein is Respiratory nitrate reductase 2 gamma chain (narV).